The sequence spans 246 residues: 1-(5-phosphoribosyl)-5-[(5-phosphoribosylamino)methylideneamino] imidazole-4-carboxamide isomerase (246 aa).

Asp-7 (proton acceptor) is an active-site residue. The active-site Proton donor is the Asp-129.

This sequence belongs to the HisA/HisF family.

It localises to the cytoplasm. It catalyses the reaction 1-(5-phospho-beta-D-ribosyl)-5-[(5-phospho-beta-D-ribosylamino)methylideneamino]imidazole-4-carboxamide = 5-[(5-phospho-1-deoxy-D-ribulos-1-ylimino)methylamino]-1-(5-phospho-beta-D-ribosyl)imidazole-4-carboxamide. It functions in the pathway amino-acid biosynthesis; L-histidine biosynthesis; L-histidine from 5-phospho-alpha-D-ribose 1-diphosphate: step 4/9. The sequence is that of 1-(5-phosphoribosyl)-5-[(5-phosphoribosylamino)methylideneamino] imidazole-4-carboxamide isomerase from Buchnera aphidicola subsp. Acyrthosiphon pisum (strain Tuc7).